A 612-amino-acid chain; its full sequence is UvrABC system protein C (612 aa).

The region spanning 20–98 (THSGVYRMLD…IKQHRPKYNI (79 aa)) is the GIY-YIG domain. The 36-residue stretch at 208 to 243 (SSVLEEISAKMYQASEDMEYEKAQVYRDQLVVLRKL) folds into the UVR domain.

The protein belongs to the UvrC family. As to quaternary structure, interacts with UvrB in an incision complex.

The protein localises to the cytoplasm. Functionally, the UvrABC repair system catalyzes the recognition and processing of DNA lesions. UvrC both incises the 5' and 3' sides of the lesion. The N-terminal half is responsible for the 3' incision and the C-terminal half is responsible for the 5' incision. The polypeptide is UvrABC system protein C (Francisella tularensis subsp. tularensis (strain FSC 198)).